Here is a 101-residue protein sequence, read N- to C-terminus: DNA-directed RNA polymerase subunit beta (101 aa).

A disordered region spans residues lysine 74–histidine 101. A compositionally biased stretch (basic and acidic residues) spans serine 86 to histidine 101.

The protein belongs to the RNA polymerase beta chain family. As to quaternary structure, the RNAP catalytic core consists of 2 alpha, 1 beta, 1 beta' and 1 omega subunit. When a sigma factor is associated with the core the holoenzyme is formed, which can initiate transcription.

It carries out the reaction RNA(n) + a ribonucleoside 5'-triphosphate = RNA(n+1) + diphosphate. Its function is as follows. DNA-dependent RNA polymerase catalyzes the transcription of DNA into RNA using the four ribonucleoside triphosphates as substrates. The chain is DNA-directed RNA polymerase subunit beta (rpoB) from Mycolicibacterium peregrinum (Mycobacterium peregrinum).